We begin with the raw amino-acid sequence, 215 residues long: dITP/XTP pyrophosphatase (215 aa).

Residue 13 to 18 participates in substrate binding; it reads THNTGK. The active-site Proton acceptor is Asp-74. Asp-74 is a Mg(2+) binding site. Substrate contacts are provided by residues Ser-75, 163–166, Lys-186, and 199–200; these read FGFD and HR.

This sequence belongs to the HAM1 NTPase family. In terms of assembly, homodimer. Requires Mg(2+) as cofactor.

The catalysed reaction is XTP + H2O = XMP + diphosphate + H(+). It catalyses the reaction dITP + H2O = dIMP + diphosphate + H(+). The enzyme catalyses ITP + H2O = IMP + diphosphate + H(+). Functionally, pyrophosphatase that catalyzes the hydrolysis of nucleoside triphosphates to their monophosphate derivatives, with a high preference for the non-canonical purine nucleotides XTP (xanthosine triphosphate), dITP (deoxyinosine triphosphate) and ITP. Seems to function as a house-cleaning enzyme that removes non-canonical purine nucleotides from the nucleotide pool, thus preventing their incorporation into DNA/RNA and avoiding chromosomal lesions. This Bartonella quintana (strain Toulouse) (Rochalimaea quintana) protein is dITP/XTP pyrophosphatase.